The following is a 115-amino-acid chain: Non-specific lipid-transfer protein Cw18 (115 aa).

Positions 1–25 are cleaved as a signal peptide; the sequence is MARTAATKLALVALVAAMLLVAADA. 4 disulfide bridges follow: C29–C77, C39–C54, C55–C97, and C75–C111.

This sequence belongs to the plant LTP family. As to expression, highly expressed in leaves and coleoptiles. No expression in roots.

Functionally, plant non-specific lipid-transfer proteins transfer phospholipids as well as galactolipids across membranes. May play a role in wax or cutin deposition in the cell walls of expanding epidermal cells and certain secretory tissues. The protein is Non-specific lipid-transfer protein Cw18 (CW18) of Hordeum vulgare (Barley).